Reading from the N-terminus, the 445-residue chain is Phosphoglucosamine mutase (445 aa).

The active-site Phosphoserine intermediate is Ser-102. Mg(2+)-binding residues include Ser-102, Asp-241, Asp-243, and Asp-245. Ser-102 carries the post-translational modification Phosphoserine.

Belongs to the phosphohexose mutase family. Mg(2+) is required as a cofactor. In terms of processing, activated by phosphorylation.

The catalysed reaction is alpha-D-glucosamine 1-phosphate = D-glucosamine 6-phosphate. Catalyzes the conversion of glucosamine-6-phosphate to glucosamine-1-phosphate. The sequence is that of Phosphoglucosamine mutase from Edwardsiella ictaluri (strain 93-146).